The primary structure comprises 260 residues: NAD kinase (260 aa).

Residue D54 is the Proton acceptor of the active site. NAD(+) contacts are provided by residues 54 to 55 (DG), 123 to 124 (ND), R150, D152, and 163 to 168 (TAYSLS).

This sequence belongs to the NAD kinase family. The cofactor is a divalent metal cation.

The protein localises to the cytoplasm. It catalyses the reaction NAD(+) + ATP = ADP + NADP(+) + H(+). In terms of biological role, involved in the regulation of the intracellular balance of NAD and NADP, and is a key enzyme in the biosynthesis of NADP. Catalyzes specifically the phosphorylation on 2'-hydroxyl of the adenosine moiety of NAD to yield NADP. The chain is NAD kinase from Caldicellulosiruptor saccharolyticus (strain ATCC 43494 / DSM 8903 / Tp8T 6331).